Reading from the N-terminus, the 232-residue chain is 2,3,4,5-tetrahydropyridine-2,6-dicarboxylate N-acetyltransferase (232 aa).

It belongs to the transferase hexapeptide repeat family. DapH subfamily.

It catalyses the reaction (S)-2,3,4,5-tetrahydrodipicolinate + acetyl-CoA + H2O = L-2-acetamido-6-oxoheptanedioate + CoA. It functions in the pathway amino-acid biosynthesis; L-lysine biosynthesis via DAP pathway; LL-2,6-diaminopimelate from (S)-tetrahydrodipicolinate (acetylase route): step 1/3. Its function is as follows. Catalyzes the transfer of an acetyl group from acetyl-CoA to tetrahydrodipicolinate. This Streptococcus pneumoniae (strain CGSP14) protein is 2,3,4,5-tetrahydropyridine-2,6-dicarboxylate N-acetyltransferase.